The following is a 556-amino-acid chain: 2-isopropylmalate synthase (556 aa).

One can recognise a Pyruvate carboxyltransferase domain in the interval 33 to 307; it reads PIWCSSDLRD…NPGLDFSDID (275 aa). Mg(2+) is bound by residues Asp42, His246, His248, and Asn282. Positions 439–556 are regulatory domain; the sequence is ANVPYALISH…SLSQTQAKAA (118 aa).

Belongs to the alpha-IPM synthase/homocitrate synthase family. LeuA type 2 subfamily. In terms of assembly, homodimer. Mg(2+) is required as a cofactor.

It is found in the cytoplasm. The enzyme catalyses 3-methyl-2-oxobutanoate + acetyl-CoA + H2O = (2S)-2-isopropylmalate + CoA + H(+). Its pathway is amino-acid biosynthesis; L-leucine biosynthesis; L-leucine from 3-methyl-2-oxobutanoate: step 1/4. In terms of biological role, catalyzes the condensation of the acetyl group of acetyl-CoA with 3-methyl-2-oxobutanoate (2-ketoisovalerate) to form 3-carboxy-3-hydroxy-4-methylpentanoate (2-isopropylmalate). In Pseudomonas syringae pv. syringae (strain B728a), this protein is 2-isopropylmalate synthase.